The primary structure comprises 338 residues: Glyceraldehyde-3-phosphate dehydrogenase (338 aa).

NAD(+)-binding positions include 11–12 (TI) and Gly-111. 140 to 142 (SCN) is a D-glyceraldehyde 3-phosphate binding site. Cys-141 (nucleophile) is an active-site residue. Arg-169 is a binding site for NAD(+). The segment at 170–195 (GSDPSEVKKGPINSIVPNPPKVPSHH) is disordered. 195–196 (HG) contacts D-glyceraldehyde 3-phosphate. Gln-302 serves as a coordination point for NAD(+).

This sequence belongs to the glyceraldehyde-3-phosphate dehydrogenase family. Homotetramer.

Its subcellular location is the cytoplasm. The enzyme catalyses D-glyceraldehyde 3-phosphate + phosphate + NADP(+) = (2R)-3-phospho-glyceroyl phosphate + NADPH + H(+). It catalyses the reaction D-glyceraldehyde 3-phosphate + phosphate + NAD(+) = (2R)-3-phospho-glyceroyl phosphate + NADH + H(+). It functions in the pathway carbohydrate degradation; glycolysis; pyruvate from D-glyceraldehyde 3-phosphate: step 1/5. The polypeptide is Glyceraldehyde-3-phosphate dehydrogenase (Methanobrevibacter smithii (strain ATCC 35061 / DSM 861 / OCM 144 / PS)).